Reading from the N-terminus, the 522-residue chain is Signal transduction histidine-protein kinase/phosphatase MprB (522 aa).

Residues 1 to 30 lie on the Cytoplasmic side of the membrane; the sequence is MIRLHRPQRPPLRAPLRATPSLSLRWRVML. The helical transmembrane segment at 31 to 51 threads the bilayer; that stretch reads LAMSMVAMVVVLMAFAVYAVI. Topologically, residues 52 to 167 are extracellular; it reads SAALYSDIDN…PTEAVMNKLR (116 aa). The helical transmembrane segment at 168 to 188 threads the bilayer; that stretch reads WVLLIVGGVGVAVAAVAGGMV. The Cytoplasmic segment spans residues 189–522; that stretch reads TRAGLRPVAR…SVDSQSARAR (334 aa). The HAMP domain occupies 190-242; that stretch reads RAGLRPVARLTEAAERVARTDDLRPIPVFGSDELARLTESFNLMLRALAESRE. In terms of domain architecture, Histidine kinase spans 250-470; sequence DAGHELRTPL…SFYVLLPGRP (221 aa). Histidine 253 is subject to Phosphohistidine; by autocatalysis. A disordered region spans residues 468–522; the sequence is GRPLPPAGHSTPAGESETDKAEAATDPAVPVAGDTANSRESANVISVDSQSARAR. Polar residues predominate over residues 502–522; the sequence is TANSRESANVISVDSQSARAR.

Mg(2+) serves as cofactor. The cofactor is Mn(2+). In terms of processing, autophosphorylated.

It localises to the cell membrane. It carries out the reaction ATP + protein L-histidine = ADP + protein N-phospho-L-histidine.. Functionally, member of the two-component regulatory system MprB/MprA which contributes to maintaining a balance among several systems involved in stress resistance and is required for establishment and maintenance of persistent infection in the host. In response to environmental signals MprB acts both as a membrane-associated protein kinase that undergoes autophosphorylation and subsequently transfers the phosphate to MprA, and a protein phosphatase that dephosphorylates phospho-MprA. This Mycobacterium avium (strain 104) protein is Signal transduction histidine-protein kinase/phosphatase MprB (mprB).